Here is a 373-residue protein sequence, read N- to C-terminus: Peptide chain release factor 2 (373 aa).

Residue Q251 is modified to N5-methylglutamine.

Belongs to the prokaryotic/mitochondrial release factor family. Post-translationally, methylated by PrmC. Methylation increases the termination efficiency of RF2.

The protein localises to the cytoplasm. Its function is as follows. Peptide chain release factor 2 directs the termination of translation in response to the peptide chain termination codons UGA and UAA. The polypeptide is Peptide chain release factor 2 (Salinispora arenicola (strain CNS-205)).